Here is a 202-residue protein sequence, read N- to C-terminus: Kunitz trypsin inhibitor 7 (202 aa).

Positions 1–25 are cleaved as a signal peptide; that stretch reads MKTFRSMLISLLLVAITTTSGVVEG. An intrachain disulfide couples C69 to C115. 4 N-linked (GlcNAc...) asparagine glycosylation sites follow: N93, N136, N144, and N198.

This sequence belongs to the protease inhibitor I3 (leguminous Kunitz-type inhibitor) family.

Functionally, exhibits Kunitz trypsin protease inhibitor activity. This Arabidopsis thaliana (Mouse-ear cress) protein is Kunitz trypsin inhibitor 7.